Reading from the N-terminus, the 2144-residue chain is Reducing polyketide synthase PKS2 (2144 aa).

One can recognise a Ketosynthase family 3 (KS3) domain in the interval 10–436; that stretch reads PMPLAIIGMS…GSNSHCIVRA (427 aa). Active-site for beta-ketoacyl synthase activity residues include Cys-183, His-319, and His-360. The interval 538 to 855 is malonyl-CoA:ACP transacylase (MAT); sequence VFAFTGQGAQ…VPSLHRGQNA (318 aa). An N-terminal hotdog fold region spans residues 924–1058; it reads HDLLGSINSS…ALVKCEATTD (135 aa). The tract at residues 924 to 1214 is dehydratase (DH) domain; it reads HDLLGSINSS…RSYSIDGTTD (291 aa). A PKS/mFAS DH domain is found at 924–1237; the sequence is HDLLGSINSS…LAVEATLAPQ (314 aa). Residues 1076-1237 form a C-terminal hotdog fold region; it reads HSCVGSPLLY…LAVEATLAPQ (162 aa). The enoyl reductase (ER) domain stretch occupies residues 1461 to 1747; that stretch reads GMPDSLYLQR…SETDSKKLLL (287 aa). The tract at residues 1771–1948 is ketoreductase (KR) domain; sequence AVYLLVGGSG…PATSLALTAV (178 aa). One can recognise a Carrier domain in the interval 2059–2136; the sequence is EATQLLLAAI…KIVDSVIVKR (78 aa). Ser-2096 carries the O-(pantetheine 4'-phosphoryl)serine modification.

The protein operates within mycotoxin biosynthesis. Reducing polyketide synthase (PKS); part of the Tox1A locus, one of the 2 loci that mediate the biosynthesis of T-toxin, a family of linear polyketides 37 to 45 carbons in length, of which the major component is 41 carbons, and which leads to high virulence to maize. One of the PKSs (PKS1 or PKS2) could synthesize a precursor, used subsequently by the other PKS as starter unit, to add additional carbons. Variability in the length of the final carbon backbone C35-47 could be achieved by varying the number of condensation cycles, or use of different starter or extender units or might be due to decarboxylation of the penultimate product, catalyzed by DEC1. Additional proteins are required for the biosynthesis of T-toxin, including oxidoreductases RED1, RED2, RED3, LAM1 and OXI1, as well as esterase TOX9. In Cochliobolus heterostrophus (strain C4 / ATCC 48331 / race T) (Southern corn leaf blight fungus), this protein is Reducing polyketide synthase PKS2.